The chain runs to 131 residues: ATP synthase epsilon chain, chloroplastic (131 aa).

This sequence belongs to the ATPase epsilon chain family. As to quaternary structure, F-type ATPases have 2 components, CF(1) - the catalytic core - and CF(0) - the membrane proton channel. CF(1) has five subunits: alpha(3), beta(3), gamma(1), delta(1), epsilon(1). CF(0) has three main subunits: a, b and c.

Its subcellular location is the plastid. It is found in the chloroplast thylakoid membrane. Produces ATP from ADP in the presence of a proton gradient across the membrane. The protein is ATP synthase epsilon chain, chloroplastic of Oltmannsiellopsis viridis (Marine flagellate).